The primary structure comprises 201 residues: Histidinol dehydrogenase (201 aa).

The protein belongs to the histidinol dehydrogenase family. In terms of assembly, homodimer. Requires Zn(2+) as cofactor.

The enzyme catalyses L-histidinol + 2 NAD(+) + H2O = L-histidine + 2 NADH + 3 H(+). It participates in amino-acid biosynthesis; L-histidine biosynthesis; L-histidine from 5-phospho-alpha-D-ribose 1-diphosphate: step 9/9. Its function is as follows. Catalyzes the sequential NAD-dependent oxidations of L-histidinol to L-histidinaldehyde and then to L-histidine. The polypeptide is Histidinol dehydrogenase (hisD) (Buchnera aphidicola subsp. Melaphis rhois).